The primary structure comprises 493 residues: GPI alpha-1,6-mannosyltransferase 2 (493 aa).

Residues Met1–Arg13 lie on the Cytoplasmic side of the membrane. A helical transmembrane segment spans residues Phe14–Pro34. The Lumenal segment spans residues Asp35–His77. The chain crosses the membrane as a helical span at residues Gly78 to Gly98. Over Thr99–Ser113 the chain is Cytoplasmic. A helical membrane pass occupies residues Cys114–Leu134. Residues His135–Asp136 lie on the Lumenal side of the membrane. A helical transmembrane segment spans residues Leu137–Ile157. The Cytoplasmic portion of the chain corresponds to Ser158–Asn161. The helical transmembrane segment at Val162–Gly182 threads the bilayer. Residues Gln183–Ser192 lie on the Lumenal side of the membrane. The helical transmembrane segment at Gly193 to Leu213 threads the bilayer. Residues Leu214 to Leu234 are Cytoplasmic-facing. The helical transmembrane segment at Val235–Phe255 threads the bilayer. Residues Gln256–Asn327 are Lumenal-facing. Residues Phe328 to Thr348 traverse the membrane as a helical segment. The Cytoplasmic segment spans residues His349–Lys378. A helical membrane pass occupies residues Val379–Val399. The Lumenal portion of the chain corresponds to Gln400–Arg469. Residues Cys470–Leu490 traverse the membrane as a helical segment. At Pro491 to Thr493 the chain is on the cytoplasmic side.

This sequence belongs to the PIGV family. In terms of processing, not N-glycosylated.

It localises to the endoplasmic reticulum membrane. Its pathway is glycolipid biosynthesis; glycosylphosphatidylinositol-anchor biosynthesis. Its function is as follows. Alpha-1,6-mannosyltransferase that catalyzes the transfer of the second mannose, via an alpha-1,6 bond, from a dolichol-phosphate-mannose (Dol-P-Man) to the alpha-D-Man-(1-&gt;4)-alpha-D-GlcN-(1-&gt;6)-(1-radyl,2-acyl-sn-glycero-3-phospho)-2-acyl-inositol (also termed H2) intermediate to generate an alpha-D-Man-(1-&gt;6)-alpha-D-Man-(1-&gt;4)-alpha-D-GlcN-(1-&gt;6)-(1-radyl,2-acyl-sn-glycero-3-phospho)-2-acyl-inositol (also termed H3) and participates in the seventh step of the glycosylphosphatidylinositol-anchor biosynthesis. Also transfers the second mannose on a 2-PEtn-alpha-D-Man-(1-&gt;4)-alpha-D-GlcN-(1-&gt;6)-(1-radyl,2-acyl-sn-glycero-3-phospho)-2-acyl-inositol (also termed H5). This Mus musculus (Mouse) protein is GPI alpha-1,6-mannosyltransferase 2.